A 519-amino-acid chain; its full sequence is Demethylepipodophyllotoxin synthase (519 aa).

A helical transmembrane segment spans residues 6–26 (CLETLLLGFFVLLPCFFYFVW). Cysteine 458 is a heme binding site.

The protein belongs to the cytochrome P450 family. Requires heme as cofactor. As to expression, rhizome-specific expression.

It is found in the membrane. It catalyses the reaction (-)-4'-desmethyl-deoxypodophyllotoxin + reduced [NADPH--hemoprotein reductase] + O2 = 4'-demethylepipodophyllotoxin + oxidized [NADPH--hemoprotein reductase] + H2O + H(+). It functions in the pathway aromatic compound metabolism; phenylpropanoid biosynthesis. Functionally, cytochrome P450 involved in the biosynthesis of etoposide, a chemotherapeutic compound of the topoisomerase inhibitor family. Catalyzes the hydroxylation of deoxypodophyllotoxin to form epipodophyllotoxin. The sequence is that of Demethylepipodophyllotoxin synthase from Sinopodophyllum hexandrum (Himalayan may apple).